A 367-amino-acid polypeptide reads, in one-letter code: Uroporphyrinogen decarboxylase (367 aa).

Position 1 is an N-acetylmethionine (Met-1). The coproporphyrinogen I site is built by Arg-37, Ala-39, Arg-41, Arg-50, Asp-86, Tyr-164, Ser-219, and His-339. Residues Arg-37, Ala-39, and Arg-41 each coordinate coproporphyrinogen III. Coproporphyrinogen III contacts are provided by Asp-86, Tyr-164, Ser-219, and His-339.

Belongs to the uroporphyrinogen decarboxylase family. In terms of assembly, homodimer.

It is found in the cytoplasm. It localises to the cytosol. It carries out the reaction uroporphyrinogen III + 4 H(+) = coproporphyrinogen III + 4 CO2. The enzyme catalyses uroporphyrinogen I + 4 H(+) = coproporphyrinogen I + 4 CO2. The protein operates within porphyrin-containing compound metabolism; protoporphyrin-IX biosynthesis; coproporphyrinogen-III from 5-aminolevulinate: step 4/4. In terms of biological role, catalyzes the sequential decarboxylation of the four acetate side chains of uroporphyrinogen to form coproporphyrinogen and participates in the fifth step in the heme biosynthetic pathway. Isomer I or isomer III of uroporphyrinogen may serve as substrate, but only coproporphyrinogen III can ultimately be converted to heme. In vitro also decarboxylates pentacarboxylate porphyrinogen I. This Mus musculus (Mouse) protein is Uroporphyrinogen decarboxylase.